Consider the following 246-residue polypeptide: E3 ubiquitin-protein ligase RNF182 (246 aa).

The segment at 22–70 adopts an RING-type zinc-finger fold; sequence CKICYNRYNLRQRKPKVLGCCHRVCAKCLYKLVDCGESPQCVIVCPFCR. The next 2 membrane-spanning stretches (helical) occupy residues 184–204 and 211–231; these read VFVW…IYLL and LGVV…IYGF.

As to quaternary structure, interacts with ATP6V0C.

The protein localises to the membrane. The protein resides in the cytoplasm. The enzyme catalyses S-ubiquitinyl-[E2 ubiquitin-conjugating enzyme]-L-cysteine + [acceptor protein]-L-lysine = [E2 ubiquitin-conjugating enzyme]-L-cysteine + N(6)-ubiquitinyl-[acceptor protein]-L-lysine.. Its pathway is protein modification; protein ubiquitination. Functionally, E3 ubiquitin-protein ligase that mediates the ubiquitination of atp6v0c and targets it to degradation via the ubiquitin-proteasome pathway. The polypeptide is E3 ubiquitin-protein ligase RNF182 (rnf182) (Xenopus laevis (African clawed frog)).